A 71-amino-acid chain; its full sequence is Small ribosomal subunit protein eS17 (71 aa).

Belongs to the eukaryotic ribosomal protein eS17 family.

The sequence is that of Small ribosomal subunit protein eS17 from Pyrobaculum neutrophilum (strain DSM 2338 / JCM 9278 / NBRC 100436 / V24Sta) (Thermoproteus neutrophilus).